The sequence spans 336 residues: Biotin synthase (336 aa).

In terms of domain architecture, Radical SAM core spans 54 to 281 (NAIQLSTLLS…KAMVRLSAGR (228 aa)). Residues C69, C73, and C76 each contribute to the [4Fe-4S] cluster site. The [2Fe-2S] cluster site is built by C113, C144, C204, and R276.

The protein belongs to the radical SAM superfamily. Biotin synthase family. As to quaternary structure, homodimer. The cofactor is [4Fe-4S] cluster. It depends on [2Fe-2S] cluster as a cofactor.

It carries out the reaction (4R,5S)-dethiobiotin + (sulfur carrier)-SH + 2 reduced [2Fe-2S]-[ferredoxin] + 2 S-adenosyl-L-methionine = (sulfur carrier)-H + biotin + 2 5'-deoxyadenosine + 2 L-methionine + 2 oxidized [2Fe-2S]-[ferredoxin]. It participates in cofactor biosynthesis; biotin biosynthesis; biotin from 7,8-diaminononanoate: step 2/2. In terms of biological role, catalyzes the conversion of dethiobiotin (DTB) to biotin by the insertion of a sulfur atom into dethiobiotin via a radical-based mechanism. This chain is Biotin synthase, found in Burkholderia thailandensis (strain ATCC 700388 / DSM 13276 / CCUG 48851 / CIP 106301 / E264).